The chain runs to 460 residues: Argininosuccinate lyase (460 aa).

It belongs to the lyase 1 family. Argininosuccinate lyase subfamily.

It localises to the cytoplasm. It catalyses the reaction 2-(N(omega)-L-arginino)succinate = fumarate + L-arginine. It functions in the pathway amino-acid biosynthesis; L-arginine biosynthesis; L-arginine from L-ornithine and carbamoyl phosphate: step 3/3. The sequence is that of Argininosuccinate lyase from Campylobacter jejuni subsp. doylei (strain ATCC BAA-1458 / RM4099 / 269.97).